Here is a 100-residue protein sequence, read N- to C-terminus: MELTPREKDKLLLFTAALLAERRLARGLKLNYPEAVALISAAVLEGARDGRTVAELMSLGREVIGREQVMDGVPEMLHDVQVEATFPDGTKLVTVHDPIV.

The protein belongs to the urease gamma subunit family. In terms of assembly, heterotrimer of UreA (gamma), UreB (beta) and UreC (alpha) subunits. Three heterotrimers associate to form the active enzyme.

The protein localises to the cytoplasm. The catalysed reaction is urea + 2 H2O + H(+) = hydrogencarbonate + 2 NH4(+). It participates in nitrogen metabolism; urea degradation; CO(2) and NH(3) from urea (urease route): step 1/1. This is Urease subunit gamma from Pseudomonas putida (strain W619).